The chain runs to 366 residues: Protein sigma-NS (366 aa).

Residues 1-11 (MASSLRAAISK) are important for ssRNA-binding and formation of complexes.

It belongs to the orthoreovirus sigma-NS protein family. Homooligomer; in presence of RNA. Interacts with protein mu-NS; this interaction allows the localization of sigma-NS to the viral factories. Interacts with host G3BP1 (via C-terminus); this interaction induces the relocalization of G3BP1 and other SG proteins to the viral factories periphery.

It localises to the host cytoplasm. Its function is as follows. Protein that binds to ssRNA and participates with protein mu-NS in forming the matrix of viral factories, which are large inclusions in the host cytoplasm where replication intermediates are assembled and viral RNA replication takes place. Plays a role in the inhibition of the integrated stress response (ISR) to escape from host cell translational shutoff. Participates in the disruption of stress granules (SG) through its association with host G3BP1 and mu-NS. This is Protein sigma-NS (S3) from Mammalia (T1L).